The sequence spans 395 residues: ADP-ribosylation factor-like protein 13A (395 aa).

Residues 28 to 35 (GLDNSGKS), 71 to 75 (DLTGD), and 130 to 133 (NKQD) each bind GTP.

It belongs to the small GTPase superfamily. Arf family.

The polypeptide is ADP-ribosylation factor-like protein 13A (Arl13a) (Rattus norvegicus (Rat)).